Consider the following 548-residue polypeptide: Protein NRT1/ PTR FAMILY 2.4 (548 aa).

The next 12 membrane-spanning stretches (helical) occupy residues 29 to 49, 65 to 85, 88 to 108, 136 to 156, 172 to 192, 200 to 220, 316 to 336, 354 to 374, 393 to 413, 429 to 449, 468 to 488, and 508 to 528; these read TLLG…VFLI, IVNG…DSFF, IPVI…LTLI, ILYA…FILA, FFNW…TAIV, WKLG…IFVA, LVPL…QMSM, VSAG…IILN, LQKV…SAVV, VLWL…HFPA, SLTS…IDVI, and YLVL…CSWF.

Belongs to the major facilitator superfamily. Proton-dependent oligopeptide transporter (POT/PTR) (TC 2.A.17) family. As to expression, strongly expressed in the root stele.

The protein localises to the membrane. Its function is as follows. Transporter involved in a passive nitrate efflux. This is Protein NRT1/ PTR FAMILY 2.4 (NPF2.4) from Arabidopsis thaliana (Mouse-ear cress).